The chain runs to 287 residues: ATP synthase gamma chain (287 aa).

Belongs to the ATPase gamma chain family. As to quaternary structure, F-type ATPases have 2 components, CF(1) - the catalytic core - and CF(0) - the membrane proton channel. CF(1) has five subunits: alpha(3), beta(3), gamma(1), delta(1), epsilon(1). CF(0) has three main subunits: a, b and c.

The protein localises to the cell inner membrane. Functionally, produces ATP from ADP in the presence of a proton gradient across the membrane. The gamma chain is believed to be important in regulating ATPase activity and the flow of protons through the CF(0) complex. The polypeptide is ATP synthase gamma chain (Baumannia cicadellinicola subsp. Homalodisca coagulata).